A 919-amino-acid chain; its full sequence is Calcium-transporting ATPase type 2C member 1 (919 aa).

Topologically, residues M1–P70 are cytoplasmic. Residues L71–A91 form a helical membrane-spanning segment. Residues V92–V104 lie on the Lumenal side of the membrane. A helical transmembrane segment spans residues S105 to R123. The Cytoplasmic portion of the chain corresponds to S124–M262. The helical transmembrane segment at D263–L282 threads the bilayer. The Lumenal portion of the chain corresponds to V283–M294. Residues F295–I312 traverse the membrane as a helical segment. Positions 303, 304, 306, and 308 each coordinate Ca(2+). The Cytoplasmic portion of the chain corresponds to V313–I699. D350 acts as the 4-aspartylphosphate intermediate in catalysis. Mg(2+) contacts are provided by D644 and D648. Residues K700–L719 form a helical membrane-spanning segment. Residues A720–L729 lie on the Lumenal side of the membrane. The chain crosses the membrane as a helical span at residues N730–G750. Ca(2+) is bound by residues N738 and D742. Topologically, residues V751 to I770 are cytoplasmic. The helical transmembrane segment at L771–V793 threads the bilayer. Residues F794 to T808 lie on the Lumenal side of the membrane. Residues T809–S828 traverse the membrane as a helical segment. The Cytoplasmic segment spans residues Q829–N841. The chain crosses the membrane as a helical span at residues R842–Y860. The Lumenal portion of the chain corresponds to F861–I875. The helical transmembrane segment at L876–K896 threads the bilayer. Over K897–V919 the chain is Cytoplasmic.

It belongs to the cation transport ATPase (P-type) (TC 3.A.3) family. Type IIA subfamily. As to quaternary structure, monomer. Homodimer. As to expression, found in most tissues except colon, thymus, spleen and leukocytes. Expressed in keratinocytes (at protein level).

The protein resides in the golgi apparatus. It localises to the trans-Golgi network membrane. It is found in the golgi stack membrane. It carries out the reaction Ca(2+)(in) + ATP + H2O = Ca(2+)(out) + ADP + phosphate + H(+). The enzyme catalyses Mn(2+)(in) + ATP + H2O = Mn(2+)(out) + ADP + phosphate + H(+). Functionally, ATP-driven pump that supplies the Golgi apparatus with Ca(2+) and Mn(2+) ions, both essential cofactors for processing and trafficking of newly synthesized proteins in the secretory pathway. Within a catalytic cycle, acquires Ca(2+) or Mn(2+) ions on the cytoplasmic side of the membrane and delivers them to the lumenal side. The transfer of ions across the membrane is coupled to ATP hydrolysis and is associated with a transient phosphorylation that shifts the pump conformation from inward-facing to outward-facing state. Plays a primary role in the maintenance of Ca(2+) homeostasis in the trans-Golgi compartment with a functional impact on Golgi and post-Golgi protein sorting as well as a structural impact on cisternae morphology. Responsible for loading the Golgi stores with Ca(2+) ions in keratinocytes, contributing to keratinocyte differentiation and epidermis integrity. Participates in Ca(2+) and Mn(2+) ions uptake into the Golgi store of hippocampal neurons and regulates protein trafficking required for neural polarity. May also play a role in the maintenance of Ca(2+) and Mn(2+) homeostasis and signaling in the cytosol while preventing cytotoxicity. The chain is Calcium-transporting ATPase type 2C member 1 from Homo sapiens (Human).